The chain runs to 281 residues: NADPH-dependent 7-cyano-7-deazaguanine reductase (281 aa).

88–90 (VES) lines the substrate pocket. Position 90–91 (90–91 (SK)) interacts with NADPH. Cys189 acts as the Thioimide intermediate in catalysis. Asp196 acts as the Proton donor in catalysis. 228–229 (HE) lines the substrate pocket. 257 to 258 (RG) is an NADPH binding site.

The protein belongs to the GTP cyclohydrolase I family. QueF type 2 subfamily. As to quaternary structure, homodimer.

It is found in the cytoplasm. It catalyses the reaction 7-aminomethyl-7-carbaguanine + 2 NADP(+) = 7-cyano-7-deazaguanine + 2 NADPH + 3 H(+). It functions in the pathway tRNA modification; tRNA-queuosine biosynthesis. Its function is as follows. Catalyzes the NADPH-dependent reduction of 7-cyano-7-deazaguanine (preQ0) to 7-aminomethyl-7-deazaguanine (preQ1). This Klebsiella pneumoniae subsp. pneumoniae (strain ATCC 700721 / MGH 78578) protein is NADPH-dependent 7-cyano-7-deazaguanine reductase.